Consider the following 396-residue polypeptide: Ribosomal RNA large subunit methyltransferase I (396 aa).

Residues 2–79 (TSAVYLQAGR…EKEVIDQHFF (78 aa)) form the PUA domain.

It belongs to the methyltransferase superfamily. RlmI family.

The protein localises to the cytoplasm. The catalysed reaction is cytidine(1962) in 23S rRNA + S-adenosyl-L-methionine = 5-methylcytidine(1962) in 23S rRNA + S-adenosyl-L-homocysteine + H(+). Its function is as follows. Specifically methylates the cytosine at position 1962 (m5C1962) of 23S rRNA. This Pseudoalteromonas translucida (strain TAC 125) protein is Ribosomal RNA large subunit methyltransferase I.